A 158-amino-acid polypeptide reads, in one-letter code: Phosphopantetheine adenylyltransferase (158 aa).

Residue threonine 10 participates in substrate binding. ATP-binding positions include 10-11 and histidine 18; that span reads TF. Residues lysine 42, leucine 74, and arginine 88 each contribute to the substrate site. ATP-binding positions include 89–91, glutamate 99, and 124–130; these read GLR and NSFISST.

The protein belongs to the bacterial CoaD family. In terms of assembly, homohexamer. The cofactor is Mg(2+).

Its subcellular location is the cytoplasm. The catalysed reaction is (R)-4'-phosphopantetheine + ATP + H(+) = 3'-dephospho-CoA + diphosphate. It functions in the pathway cofactor biosynthesis; coenzyme A biosynthesis; CoA from (R)-pantothenate: step 4/5. Its function is as follows. Reversibly transfers an adenylyl group from ATP to 4'-phosphopantetheine, yielding dephospho-CoA (dPCoA) and pyrophosphate. The sequence is that of Phosphopantetheine adenylyltransferase from Shewanella sediminis (strain HAW-EB3).